Reading from the N-terminus, the 61-residue chain is MPRKALIAKQQRKQKYRTREYNRCQRCGRARAYYRKFGLCRICLRELAHEGKIPGVKKASW.

The Zn(2+) site is built by Cys-24, Cys-27, Cys-40, and Cys-43.

It belongs to the universal ribosomal protein uS14 family. Zinc-binding uS14 subfamily. Part of the 30S ribosomal subunit. Contacts proteins S3 and S10. Requires Zn(2+) as cofactor.

Functionally, binds 16S rRNA, required for the assembly of 30S particles and may also be responsible for determining the conformation of the 16S rRNA at the A site. The sequence is that of Small ribosomal subunit protein uS14 from Rubrobacter xylanophilus (strain DSM 9941 / JCM 11954 / NBRC 16129 / PRD-1).